We begin with the raw amino-acid sequence, 304 residues long: D-alanine--D-alanine ligase (304 aa).

The region spanning 104 to 299 (KMVWLSCGLP…FEALCLAILA (196 aa)) is the ATP-grasp domain. Position 130–185 (130–185 (ARDLGLPIFVKPVHEGSSMGATKVTEAGQLRAAWELAARYDSLVIAEEFISGQELT)) interacts with ATP. 3 residues coordinate Mg(2+): Asp253, Glu266, and Asn268.

It belongs to the D-alanine--D-alanine ligase family. It depends on Mg(2+) as a cofactor. Mn(2+) is required as a cofactor.

The protein resides in the cytoplasm. It catalyses the reaction 2 D-alanine + ATP = D-alanyl-D-alanine + ADP + phosphate + H(+). The protein operates within cell wall biogenesis; peptidoglycan biosynthesis. Cell wall formation. In Azoarcus sp. (strain BH72), this protein is D-alanine--D-alanine ligase.